A 273-amino-acid chain; its full sequence is Dermonecrotic toxin LruSicTox-alphaIC1c (273 aa).

H5 is an active-site residue. The Mg(2+) site is built by E25 and D27. H41 functions as the Nucleophile in the catalytic mechanism. 2 disulfide bridges follow: C45–C51 and C47–C190. D85 serves as a coordination point for Mg(2+).

This sequence belongs to the arthropod phospholipase D family. Class II subfamily. It depends on Mg(2+) as a cofactor. As to expression, expressed by the venom gland.

The protein localises to the secreted. The enzyme catalyses an N-(acyl)-sphingosylphosphocholine = an N-(acyl)-sphingosyl-1,3-cyclic phosphate + choline. It catalyses the reaction an N-(acyl)-sphingosylphosphoethanolamine = an N-(acyl)-sphingosyl-1,3-cyclic phosphate + ethanolamine. The catalysed reaction is a 1-acyl-sn-glycero-3-phosphocholine = a 1-acyl-sn-glycero-2,3-cyclic phosphate + choline. It carries out the reaction a 1-acyl-sn-glycero-3-phosphoethanolamine = a 1-acyl-sn-glycero-2,3-cyclic phosphate + ethanolamine. Dermonecrotic toxins cleave the phosphodiester linkage between the phosphate and headgroup of certain phospholipids (sphingolipid and lysolipid substrates), forming an alcohol (often choline) and a cyclic phosphate. This toxin acts on sphingomyelin (SM). It may also act on ceramide phosphoethanolamine (CPE), lysophosphatidylcholine (LPC) and lysophosphatidylethanolamine (LPE), but not on lysophosphatidylserine (LPS), and lysophosphatidylglycerol (LPG). It acts by transphosphatidylation, releasing exclusively cyclic phosphate products as second products. Induces dermonecrosis, hemolysis, increased vascular permeability, edema, inflammatory response, and platelet aggregation. The sequence is that of Dermonecrotic toxin LruSicTox-alphaIC1c from Loxosceles rufescens (Mediterranean recluse spider).